The chain runs to 163 residues: Large ribosomal subunit protein bL21 (163 aa).

The interval 124–163 (KETTKKTKATVSIKKTAKKPSEKKSAPQKKAAVVSNNKED) is disordered.

This sequence belongs to the bacterial ribosomal protein bL21 family. In terms of assembly, part of the 50S ribosomal subunit. Contacts protein L20.

Functionally, this protein binds to 23S rRNA in the presence of protein L20. The polypeptide is Large ribosomal subunit protein bL21 (Bartonella quintana (strain Toulouse) (Rochalimaea quintana)).